Here is a 274-residue protein sequence, read N- to C-terminus: Orotidine 5'-phosphate decarboxylase (274 aa).

A compositionally biased stretch (low complexity) spans 1 to 15; sequence MSAGRRSSGGRSAAA. A disordered region spans residues 1 to 21; it reads MSAGRRSSGGRSAAAPRFTPP. Substrate is bound by residues Asp-32, Lys-54, 99-108, Thr-154, Arg-215, Gln-224, Gly-244, and Arg-245; that span reads DLKLHDIPAT. The active-site Proton donor is the Lys-101.

Belongs to the OMP decarboxylase family. Type 1 subfamily. In terms of assembly, homodimer.

It carries out the reaction orotidine 5'-phosphate + H(+) = UMP + CO2. The protein operates within pyrimidine metabolism; UMP biosynthesis via de novo pathway; UMP from orotate: step 2/2. Functionally, catalyzes the decarboxylation of orotidine 5'-monophosphate (OMP) to uridine 5'-monophosphate (UMP). The sequence is that of Orotidine 5'-phosphate decarboxylase from Frankia casuarinae (strain DSM 45818 / CECT 9043 / HFP020203 / CcI3).